Here is a 173-residue protein sequence, read N- to C-terminus: MEIKDLQDYVAIVNDWPKKGIVFKDITPLMNDGEAYRFATDKIVEYAKELKIDIIVGPEARGFIIGCPVAYALGIGFAPVRKPGKLPRETIEMEYDLEYGTNKLSMHSDAIKPGQRVLITDDLLATGGTIEATIKLVEELGGIVAGCAFLIELKELEGHKKLNGYDRLILMKL.

The protein belongs to the purine/pyrimidine phosphoribosyltransferase family. As to quaternary structure, homodimer.

The protein localises to the cytoplasm. The catalysed reaction is AMP + diphosphate = 5-phospho-alpha-D-ribose 1-diphosphate + adenine. It functions in the pathway purine metabolism; AMP biosynthesis via salvage pathway; AMP from adenine: step 1/1. Its function is as follows. Catalyzes a salvage reaction resulting in the formation of AMP, that is energically less costly than de novo synthesis. The protein is Adenine phosphoribosyltransferase of Listeria monocytogenes serovar 1/2a (strain ATCC BAA-679 / EGD-e).